The primary structure comprises 200 residues: Dephospho-CoA kinase (200 aa).

Residues 3 to 200 (IFGLTGGIGS…LNVNNKCNMD (198 aa)) form the DPCK domain. Residue 11 to 16 (GSGKSL) coordinates ATP.

Belongs to the CoaE family.

Its subcellular location is the cytoplasm. It carries out the reaction 3'-dephospho-CoA + ATP = ADP + CoA + H(+). It functions in the pathway cofactor biosynthesis; coenzyme A biosynthesis; CoA from (R)-pantothenate: step 5/5. Catalyzes the phosphorylation of the 3'-hydroxyl group of dephosphocoenzyme A to form coenzyme A. The polypeptide is Dephospho-CoA kinase (Ehrlichia canis (strain Jake)).